The following is a 382-amino-acid chain: Transcription factor MYB104 (382 aa).

HTH myb-type domains are found at residues 13–69 (KKTF…KPSL) and 70–120 (KKGP…MRLK). 2 DNA-binding regions (H-T-H motif) span residues 41-65 (WTHV…MNHL) and 93-116 (WSQM…NARR). Residues 326–364 (IPKTDTSSESQLFQSSLRSHTDATPDIANTTGYVGSNER) form a disordered region. Polar residues-rich tracts occupy residues 329–343 (TDTS…SSLR) and 352–364 (IANT…SNER).

It is found in the nucleus. This is Transcription factor MYB104 (MYB104) from Arabidopsis thaliana (Mouse-ear cress).